Here is a 147-residue protein sequence, read N- to C-terminus: Hemoglobin subunit gamma-1 (147 aa).

G2 carries the N-acetylglycine; in form Hb F1 modification. In terms of domain architecture, Globin spans H3–H147. The residue at position 13 (T13) is a Phosphothreonine. 3 positions are modified to phosphoserine: S45, S51, and S53. K60 is modified (N6-acetyllysine). H64 serves as a coordination point for heme b. At K83 the chain carries N6-acetyllysine. Residue H93 participates in heme b binding. An S-nitrosocysteine modification is found at C94. Phosphoserine is present on S140.

This sequence belongs to the globin family. Heterotetramer of two alpha chains and two gamma chains in fetal hemoglobin (Hb F). In the case of deletions affecting one or more of the alpha chains, the excess gamma chains form homotetramers that exhibit neither Bohr effect nor heme-heme cooperativity (hemoglobin Bart's). In terms of processing, acetylation of Gly-2 converts Hb F to the minor Hb F1. In terms of tissue distribution, red blood cells.

Its function is as follows. Gamma chains make up the fetal hemoglobin F, in combination with alpha chains. This is Hemoglobin subunit gamma-1 (HBG1) from Homo sapiens (Human).